The following is an 834-amino-acid chain: ATP-dependent DNA helicase fml1 (834 aa).

Positions 80–248 (IVQKALFENV…NVIDSLHISR (169 aa)) constitute a Helicase ATP-binding domain. 93 to 100 (LPTGLGKT) serves as a coordination point for ATP. Residues 196–199 (DEAH) carry the DEAH box motif. One can recognise a Helicase C-terminal domain in the interval 416–582 (HLERIVTEYF…GLSLSEKSYR (167 aa)). Residues 650–690 (EESPFEICPVTYSIEQEKKLEKYKRVCLRGLDIHRNRRLSQ) are interaction with MHF complex. The disordered stretch occupies residues 738–769 (NSTDRDTKQPKMHDFRQPLHPNPMTTLKRKGQ). The span at 740–754 (TDRDTKQPKMHDFRQ) shows a compositional bias: basic and acidic residues.

The protein belongs to the DEAD box helicase family. DEAH subfamily. FANCM sub-subfamily.

The protein resides in the cytoplasm. The protein localises to the nucleus. It localises to the nucleolus. The catalysed reaction is ATP + H2O = ADP + phosphate + H(+). Functionally, ATP-dependent DNA helicase involved in DNA damage repair by homologous recombination and in genome maintenance. Capable of unwinding D-loops. Plays a role in limiting crossover recombination during mitotic DNA double-strand break (DSB) repair. Component of a FANCM-MHF complex which promotes gene conversion at blocked replication forks, probably by reversal of the stalled fork. FANCM-MHF also promotes non-crossover recombination in meiotic cells. The polypeptide is ATP-dependent DNA helicase fml1 (Schizosaccharomyces pombe (strain 972 / ATCC 24843) (Fission yeast)).